The sequence spans 355 residues: Peptide chain release factor 1 (355 aa).

Gln233 carries the N5-methylglutamine modification.

This sequence belongs to the prokaryotic/mitochondrial release factor family. Methylated by PrmC. Methylation increases the termination efficiency of RF1.

It is found in the cytoplasm. Its function is as follows. Peptide chain release factor 1 directs the termination of translation in response to the peptide chain termination codons UAG and UAA. This is Peptide chain release factor 1 from Syntrophobacter fumaroxidans (strain DSM 10017 / MPOB).